We begin with the raw amino-acid sequence, 295 residues long: Glutamyl-Q tRNA(Asp) synthetase (295 aa).

L-glutamate contacts are provided by residues 5-9 and Glu-41; that span reads RFAPS. A 'HIGH' region motif is present at residues 8-18; it reads PSPTGLLHIGS. Residues Cys-97, Cys-99, Tyr-117, and Cys-121 each coordinate Zn(2+). Positions 178 and 196 each coordinate L-glutamate. The 'KMSKS' region signature appears at 234-238; sequence KWSKQ. ATP is bound at residue Lys-237.

Belongs to the class-I aminoacyl-tRNA synthetase family. GluQ subfamily. The cofactor is Zn(2+).

In terms of biological role, catalyzes the tRNA-independent activation of glutamate in presence of ATP and the subsequent transfer of glutamate onto a tRNA(Asp). Glutamate is transferred on the 2-amino-5-(4,5-dihydroxy-2-cyclopenten-1-yl) moiety of the queuosine in the wobble position of the QUC anticodon. The polypeptide is Glutamyl-Q tRNA(Asp) synthetase (Neisseria gonorrhoeae (strain ATCC 700825 / FA 1090)).